The following is a 452-amino-acid chain: Heat shock protein 83 (452 aa).

Arg124 provides a ligand contact to ATP. Residues 448–452 (MEQVD) carry the TPR repeat-binding motif.

The protein belongs to the heat shock protein 90 family. As to quaternary structure, homodimer.

It is found in the cytoplasm. Molecular chaperone that promotes the maturation, structural maintenance and proper regulation of specific target proteins involved for instance in cell cycle control and signal transduction. Undergoes a functional cycle that is linked to its ATPase activity. This cycle probably induces conformational changes in the client proteins, thereby causing their activation. Interacts dynamically with various co-chaperones that modulate its substrate recognition, ATPase cycle and chaperone function. The polypeptide is Heat shock protein 83 (HSP83) (Leishmania donovani).